We begin with the raw amino-acid sequence, 444 residues long: Phosphoglucosamine mutase (444 aa).

S102 serves as the catalytic Phosphoserine intermediate. Residues S102, D241, D243, and D245 each contribute to the Mg(2+) site. S102 carries the phosphoserine modification.

It belongs to the phosphohexose mutase family. Mg(2+) is required as a cofactor. Activated by phosphorylation.

It carries out the reaction alpha-D-glucosamine 1-phosphate = D-glucosamine 6-phosphate. In terms of biological role, catalyzes the conversion of glucosamine-6-phosphate to glucosamine-1-phosphate. The chain is Phosphoglucosamine mutase from Actinobacillus pleuropneumoniae serotype 7 (strain AP76).